Consider the following 371-residue polypeptide: Vasopressin V2 receptor (371 aa).

Residues 1-27 (MILVSTTSAVPGALSSPSSPSNSSQEE) form a disordered region. The Extracellular segment spans residues 1–38 (MILVSTTSAVPGALSSPSSPSNSSQEELLDDRDPLLVR). The span at 15 to 24 (SSPSSPSNSS) shows a compositional bias: low complexity. An N-linked (GlcNAc...) asparagine glycan is attached at asparagine 22. Residues 39 to 63 (AELALLSTIFVAVALSNGLVLGALI) traverse the membrane as a helical segment. The Cytoplasmic segment spans residues 64–77 (RRGRRGRWAPMHVF). A helical transmembrane segment spans residues 78-98 (ISHLCLADLAVALFQVLPQLA). Over 99 to 113 (WDATDRFHGPDALCR) the chain is Extracellular. A helical transmembrane segment spans residues 114–135 (AVKYLQMVGMYASSYMILAMTL). The Cytoplasmic portion of the chain corresponds to 136–159 (DRHRAICRPMLAYRHGGGARWNRP). The chain crosses the membrane as a helical span at residues 160–180 (VLVAWAFSLLLSLPQLFIFAQ). The Extracellular portion of the chain corresponds to 181–200 (RDVGNGSGVFDCWARFAEPW). Asparagine 185 is a glycosylation site (N-linked (GlcNAc...) asparagine). Residues 201–220 (GLRAYVTWIALMVFVAPALG) form a helical membrane-spanning segment. At 221–271 (IAACQVLIFREIHASLVPGPSERAGRRRRGHRTGSPSEGAHVSAAMAKTVR) the chain is on the cytoplasmic side. The disordered stretch occupies residues 240–259 (PSERAGRRRRGHRTGSPSEG). A helical transmembrane segment spans residues 272 to 293 (MTLVIVIVYVLCWAPFFLVQLW). The Extracellular segment spans residues 294–308 (AAWDPEAPLERPPFV). The chain crosses the membrane as a helical span at residues 309–328 (LLMLLASLNSCTNPWIYASF). Over 329–371 (SSSVSSELRSLLCCAQRHTTHSLGPQDESCATASSSLMKDTPS) the chain is Cytoplasmic. Residues cysteine 341 and cysteine 342 are each lipidated (S-palmitoyl cysteine). Positions 349 to 371 (HSLGPQDESCATASSSLMKDTPS) are disordered. Over residues 357–371 (SCATASSSLMKDTPS) the composition is skewed to polar residues.

Belongs to the G-protein coupled receptor 1 family. Vasopressin/oxytocin receptor subfamily. In terms of assembly, interacts with ARRDC4. Identified in a complex containing at least ARRDC4, V2R and HGS. Interacts with TMEM147. As to expression, highly expressed in kidney (at protein level) and moderately expressed in liver (at protein level). No or extremely low expression in left ventricule, muscle, bone and brain (at protein level).

It is found in the cell membrane. Its function is as follows. Receptor for arginine vasopressin. The activity of this receptor is mediated by G proteins which activate adenylate cyclase. Involved in renal water reabsorption. In Mus musculus (Mouse), this protein is Vasopressin V2 receptor (Avpr2).